The chain runs to 146 residues: Hemoglobin subunit beta (146 aa).

Val1 is modified (N-acetylvaline). Positions 2–146 (QLSGEEKAAV…VANALAHKYH (145 aa)) constitute a Globin domain. Ser44 bears the Phosphoserine mark. Lys59 bears the N6-acetyllysine mark. His63 serves as a coordination point for heme b. The residue at position 82 (Lys82) is an N6-acetyllysine. His92 is a binding site for heme b. Position 93 is an S-nitrosocysteine (Cys93). Residue Lys144 is modified to N6-acetyllysine.

Belongs to the globin family. In terms of assembly, heterotetramer of two alpha chains and two beta chains. Red blood cells.

In terms of biological role, involved in oxygen transport from the lung to the various peripheral tissues. The chain is Hemoglobin subunit beta (HBB) from Equus caballus (Horse).